We begin with the raw amino-acid sequence, 72 residues long: Heat shock factor-binding protein 1-like protein 1 (72 aa).

A coiled-coil region spans residues 12-66; that stretch reads DLLQNAAENLLQEVEEHFQALTATLNLRMEEMGNRIEDLQRNVDDLMAQAGIENS.

It belongs to the HSBP1 family.

This is Heat shock factor-binding protein 1-like protein 1 (Hsbp1l1) from Rattus norvegicus (Rat).